A 59-amino-acid polypeptide reads, in one-letter code: Gallinacin-14 (59 aa).

A signal peptide spans 1–18 (MGIFLLFLVLLAVPQAAP). Intrachain disulfides connect cysteine 25/cysteine 54, cysteine 32/cysteine 47, and cysteine 37/cysteine 55.

This sequence belongs to the beta-defensin family.

It localises to the secreted. It is found in the cytoplasmic granule. Has bactericidal activity. In Gallus gallus (Chicken), this protein is Gallinacin-14 (GAL14).